Consider the following 311-residue polypeptide: MNRKHLPFIFALLLCLSPWVSSPTALVLGFLLASTGLVPSQLPISTYTKKLLSYSIIGLGFGIQFQQAIAVTSDGIGLIVVTIAGTLLLGFLVAKVIKLETTTAYLISAGTAICGGSAIAAVAPAIKAKDQQIALALATVFVLNSLALFIFPVIGHALALDQQTFGTWAAIAIHDTSSVVGAASAYGEQALTTATTLKLARALWIIPVALLSAILFARGNGEEGKRKLVLPYFIFWYCAAIAFSDLFPQFESVYQGIFSVAKQALVVCLFLIGCSISVEKLKSAGAKPLIFGLSLWVVISTTSLSWLLLTR.

10 consecutive transmembrane segments (helical) span residues 8–28 (FIFALLLCLSPWVSSPTALVL), 51–71 (LLSYSIIGLGFGIQFQQAIAV), 74–94 (DGIGLIVVTIAGTLLLGFLVA), 106–126 (LISAGTAICGGSAIAAVAPAI), 133–153 (IALALATVFVLNSLALFIFPV), 165–185 (FGTWAAIAIHDTSSVVGAASA), 197–217 (LKLARALWIIPVALLSAILFA), 228–248 (LVLPYFIFWYCAAIAFSDLFP), 256–276 (GIFSVAKQALVVCLFLIGCSI), and 289–309 (LIFGLSLWVVISTTSLSWLLL).

This sequence belongs to the UPF0324 family.

Its subcellular location is the cell membrane. This chain is UPF0324 membrane protein VV1_3166, found in Vibrio vulnificus (strain CMCP6).